The following is a 165-amino-acid chain: Nucleotide-binding protein PMT9312_0481 (165 aa).

Belongs to the YajQ family.

Nucleotide-binding protein. The polypeptide is Nucleotide-binding protein PMT9312_0481 (Prochlorococcus marinus (strain MIT 9312)).